The chain runs to 470 residues: Acyltransferase BOA11 (470 aa).

His156 functions as the Proton acceptor in the catalytic mechanism.

This sequence belongs to the plant acyltransferase family.

Its pathway is polyketide biosynthesis. In terms of biological role, acyltransferase; part of the gene cluster B that mediates the biosynthesis of botcinic acid and its botcinin derivatives, acetate-derived polyketides that contribute to virulence when combined with the sesquiterpene botrydial. Botcinic acid and its derivatives have been shown to induce chlorosis and necrosis during host plant infection, but also have antifungal activities. Two polyketide synthases, BOA6 and BOA9, are involved in the biosynthesis of botcinins. BOA6 mediates the formation of the per-methylated tetraketide core by condensation of four units of malonyl-CoA with one unit of acetyl-CoA, which would be methylated in activated methylene groups to yield a bicyclic acid intermediate that could then either be converted to botrylactone derivatives or lose the starter acetate unit through a retro-Claisen type C-C bond cleavage to yield botcinin derivatives. The second polyketide synthase, BOA9, is probably required for the biosynthesis of the tetraketide side chain of botcinins. The methyltransferase (MT) domain within BOA6 is probably responsible for the incorporation of four methyl groups. The trans-enoyl reductase BOA5 might take over the enoyl reductase function of BOA6 that misses an ER domain. The monooxygenases BOA2, BOA3 and BOA4 might be involved in further hydroxylations at C4, C5 and C8, whereas BOA7, close to BOA9, could potentially be involved in the hydroxylation at C4 in the side chain of botcinins. This is Acyltransferase BOA11 from Botryotinia fuckeliana (strain B05.10) (Noble rot fungus).